Reading from the N-terminus, the 160-residue chain is RNA-binding protein 3 (160 aa).

An RRM domain is found at glycine 6–lysine 84. Arginine 47 bears the Omega-N-methylarginine mark. The segment at histidine 81–arginine 116 is disordered. A compositionally biased stretch (gly residues) spans tyrosine 103–serine 114. The residue at position 105 (arginine 105) is an Asymmetric dimethylarginine; alternate. Arginine 105 carries the post-translational modification Dimethylated arginine; alternate. Omega-N-methylarginine; alternate is present on arginine 105. An omega-N-methylarginine mark is found at arginine 120 and arginine 134. The interval serine 135 to asparagine 160 is disordered. At serine 150 the chain carries Phosphoserine. Tyrosine 158 is subject to Phosphotyrosine.

In terms of assembly, interacts with RPL4. Associates with the 60S ribosomal subunits.

The protein localises to the nucleus. It is found in the cytoplasm. The protein resides in the cell projection. It localises to the dendrite. Cold-inducible mRNA binding protein that enhances global protein synthesis at both physiological and mild hypothermic temperatures. Reduces the relative abundance of microRNAs, when overexpressed. Enhances phosphorylation of translation initiation factors and active polysome formation. This is RNA-binding protein 3 from Capra hircus (Goat).